A 442-amino-acid polypeptide reads, in one-letter code: C4-dicarboxylate transport protein (442 aa).

The next 8 helical transmembrane spans lie at 19–39 (QLYF…HFEP), 55–75 (LVKM…IAGM), 90–110 (AYFL…AHVV), 161–181 (ILQV…VGDA), 199–219 (LVGI…AFTI), 232–252 (WLVG…LGFV), 318–338 (IYMT…LTLG), and 366–386 (AATL…ILGV).

It belongs to the dicarboxylate/amino acid:cation symporter (DAACS) (TC 2.A.23) family.

It localises to the cell inner membrane. Responsible for the transport of dicarboxylates such as succinate, fumarate, and malate from the periplasm across the membrane. The protein is C4-dicarboxylate transport protein of Delftia acidovorans (strain DSM 14801 / SPH-1).